A 75-amino-acid chain; its full sequence is uncharacterized protein (75 aa).

A helical transmembrane segment spans residues Leu-12–Val-32.

The protein localises to the cell membrane. This is an uncharacterized protein from Bacillus subtilis (strain 168).